The primary structure comprises 127 residues: Arginine decarboxylase proenzyme (127 aa).

Serine 72 acts as the Schiff-base intermediate with substrate; via pyruvic acid in catalysis. Serine 72 carries the post-translational modification Pyruvic acid (Ser); by autocatalysis. Histidine 77 acts as the Proton acceptor; for processing activity in catalysis. The active-site Proton donor; for catalytic activity is the cysteine 92.

The protein belongs to the prokaryotic AdoMetDC family. Type 1 subfamily. Heterooctamer of four alpha and four beta chains arranged as a tetramer of alpha/beta heterodimers. Requires pyruvate as cofactor. Post-translationally, is synthesized initially as an inactive proenzyme. Formation of the active enzyme involves a self-maturation process in which the active site pyruvoyl group is generated from an internal serine residue via an autocatalytic post-translational modification. Two non-identical subunits are generated from the proenzyme in this reaction, and the pyruvate is formed at the N-terminus of the alpha chain, which is derived from the carboxyl end of the proenzyme. The post-translation cleavage follows an unusual pathway, termed non-hydrolytic serinolysis, in which the side chain hydroxyl group of the serine supplies its oxygen atom to form the C-terminus of the beta chain, while the remainder of the serine residue undergoes an oxidative deamination to produce ammonia and the pyruvoyl group blocking the N-terminus of the alpha chain.

It carries out the reaction L-arginine + H(+) = agmatine + CO2. It participates in amine and polyamine biosynthesis; agmatine biosynthesis; agmatine from L-arginine: step 1/1. Specifically catalyzes the decarboxylation of L-arginine to agmatine. Has no S-adenosylmethionine decarboxylase (AdoMetDC) activity. This Staphylothermus marinus (strain ATCC 43588 / DSM 3639 / JCM 9404 / F1) protein is Arginine decarboxylase proenzyme.